Consider the following 246-residue polypeptide: Chanoclavine-I dehydrogenase easD (246 aa).

A signal peptide spans 1–20; sequence MASVSSKIFAITGGASGIGA. Residues Ile-18, Asp-66, Arg-132, Tyr-169, and Lys-173 each coordinate NADP(+). Tyr-169 (proton donor) is an active-site residue. Lys-173 functions as the Lowers pKa of active site Tyr in the catalytic mechanism.

Belongs to the short-chain dehydrogenases/reductases (SDR) family. In terms of assembly, homotetramer.

The catalysed reaction is chanoclavine-I + NAD(+) = chanoclavine-I aldehyde + NADH + H(+). The protein operates within alkaloid biosynthesis; ergot alkaloid biosynthesis. Its function is as follows. Chanoclavine-I dehydrogenase; part of the gene cluster that mediates the biosynthesis of fungal ergot alkaloid. DmaW catalyzes the first step of ergot alkaloid biosynthesis by condensing dimethylallyl diphosphate (DMAP) and tryptophan to form 4-dimethylallyl-L-tryptophan. The second step is catalyzed by the methyltransferase easF that methylates 4-dimethylallyl-L-tryptophan in the presence of S-adenosyl-L-methionine, resulting in the formation of 4-dimethylallyl-L-abrine. The catalase easC and the FAD-dependent oxidoreductase easE then transform 4-dimethylallyl-L-abrine to chanoclavine-I which is further oxidized by easD in the presence of NAD(+), resulting in the formation of chanoclavine-I aldehyde. Chanoclavine-I aldehyde is the precursor of ergoamides and ergopeptines in Clavicipitaceae, and clavine-type alcaloids such as fumiclavine in Trichocomaceae. However, the metabolites downstream of chanoclavine-I aldehyde in Arthrodermataceae have not been identified yet. The chain is Chanoclavine-I dehydrogenase easD from Arthroderma benhamiae (strain ATCC MYA-4681 / CBS 112371) (Trichophyton mentagrophytes).